Consider the following 476-residue polypeptide: Aspartyl/glutamyl-tRNA(Asn/Gln) amidotransferase subunit B (476 aa).

This sequence belongs to the GatB/GatE family. GatB subfamily. Heterotrimer of A, B and C subunits.

It catalyses the reaction L-glutamyl-tRNA(Gln) + L-glutamine + ATP + H2O = L-glutaminyl-tRNA(Gln) + L-glutamate + ADP + phosphate + H(+). The catalysed reaction is L-aspartyl-tRNA(Asn) + L-glutamine + ATP + H2O = L-asparaginyl-tRNA(Asn) + L-glutamate + ADP + phosphate + 2 H(+). In terms of biological role, allows the formation of correctly charged Asn-tRNA(Asn) or Gln-tRNA(Gln) through the transamidation of misacylated Asp-tRNA(Asn) or Glu-tRNA(Gln) in organisms which lack either or both of asparaginyl-tRNA or glutaminyl-tRNA synthetases. The reaction takes place in the presence of glutamine and ATP through an activated phospho-Asp-tRNA(Asn) or phospho-Glu-tRNA(Gln). The protein is Aspartyl/glutamyl-tRNA(Asn/Gln) amidotransferase subunit B of Oleidesulfovibrio alaskensis (strain ATCC BAA-1058 / DSM 17464 / G20) (Desulfovibrio alaskensis).